Consider the following 814-residue polypeptide: Threonine--tRNA ligase 2, cytoplasmic (814 aa).

A coiled-coil region spans residues 2–72 (AAHIAQRLTV…SLREEQERAR (71 aa)). A disordered region spans residues 62 to 142 (RSLREEQERA…GHKQEGPCAP (81 aa)). 3 stretches are compositionally biased toward basic and acidic residues: residues 63–72 (SLREEQERAR), 88–102 (EEPK…EKGQ), and 119–137 (GNKK…HKQE). The region spanning 172–234 (KPIKITLADG…EQDSNVELLK (63 aa)) is the TGS domain. Residues 798 to 804 (KLKTLKK) carry the Nuclear localization signal motif.

It belongs to the class-II aminoacyl-tRNA synthetase family.

The protein localises to the cytoplasm. It is found in the nucleus. It catalyses the reaction tRNA(Thr) + L-threonine + ATP = L-threonyl-tRNA(Thr) + AMP + diphosphate + H(+). Its function is as follows. Catalyzes the attachment of threonine to tRNA(Thr) in a two-step reaction: threonine is first activated by ATP to form Thr-AMP and then transferred to the acceptor end of tRNA(Thr). Also edits incorrectly charged tRNA(Thr) via its editing domain, at the post-transfer stage. The chain is Threonine--tRNA ligase 2, cytoplasmic (tars3) from Xenopus tropicalis (Western clawed frog).